A 625-amino-acid polypeptide reads, in one-letter code: Vitamin B12 transporter BtuB (625 aa).

A signal peptide spans 1–21 (MTIKKYTLLTALSVTAFSGWA). The TonB box motif lies at 31-38 (DEMVVTAN). In terms of domain architecture, TBDR plug spans 43–157 (PKSSVLAPVD…IGGVINILTG (115 aa)). Residues serine 90, asparagine 97, and 115–116 (IT) contribute to the cyanocob(III)alamin site. One can recognise a TBDR beta-barrel domain in the interval 160–625 (KPGTTLSAGL…EYYFTGSYNF (466 aa)). 3 beta stranded membrane passes run 163–170 (TTLSAGLG), 174–183 (YQTYDGSTQQ), and 189–200 (TTVTLAGNYTYS). Ca(2+) is bound by residues aspartate 204, glutamine 217, aspartate 219, and aspartate 221. 2 beta stranded membrane-spanning segments follow: residues 223-233 (FMGKMLWAGLE) and 238-254 (EQFN…NRSD). Ca(2+) is bound by residues tyrosine 255, aspartate 256, and aspartate 269. 14 consecutive transmembrane segments (beta stranded) span residues 271 to 285 (RKLS…LRYK), 287 to 304 (GIYA…KDYN), 317 to 333 (SLDE…NTFQ), 336 to 345 (NGMISAGADW), 363 to 379 (FTQH…QQIS), 381 to 391 (VTLEGAVRSDD), 395 to 410 (FGWH…WEFI), 413 to 427 (YRLI…KAPN), 445 to 454 (ESKQWEGGVE), 460 to 469 (LTWRLSAYRN), 484 to 501 (YFNI…TGSF), 505 to 520 (PLSH…PRNA), 528 to 540 (RRAK…QLDW), and 546 to 561 (DWSV…YDKD). Serine 317 is a cyanocob(III)alamin binding site. Residue arginine 528 coordinates cyanocob(III)alamin. Residue tyrosine 562 participates in cyanocob(III)alamin binding. Transmembrane regions (beta stranded) follow at residues 569-583 (TVEL…LAVS), 596-607 (IANLFDKDYEMV), and 613-625 (PGRE…SYNF). A TonB C-terminal box motif is present at residues 608 to 625 (YGYQTPGREYYFTGSYNF).

It belongs to the TonB-dependent receptor family. BtuB (TC 1.B.14.3.1) subfamily.

It is found in the cell outer membrane. In terms of biological role, involved in the active translocation of vitamin B12 (cyanocobalamin) across the outer membrane to the periplasmic space. It derives its energy for transport by interacting with the trans-periplasmic membrane protein TonB. This Yersinia pestis bv. Antiqua (strain Antiqua) protein is Vitamin B12 transporter BtuB.